The chain runs to 587 residues: Ankyrin repeat and SOCS box protein 14 (587 aa).

ANK repeat units follow at residues 82–112, 117–146, 150–179, 183–212, 216–245, 248–277, 281–310, 313–342, 355–384, 385–414, and 416–449; these read IGWI…SLWE, NGET…NPNA, EGNS…DVNL, NERT…HPDP, YGFT…IFCL, DSSS…DANI, SGHL…LAAI, SGIS…DVNF, HRKS…LPNQ, DPVN…NVNY, and CRVN…DTER. One can recognise an SOCS box domain in the interval 521–576; that stretch reads WSEIHFILTNPRSLKHLCRLKIRKCMGRLHLRCPVFMSFLPLPNRLKAYVLYKEYD.

The protein belongs to the ankyrin SOCS box (ASB) family. In terms of assembly, interacts with MAPRE2; this interaction promotes MAPRE2 degradation.

It participates in protein modification; protein ubiquitination. In terms of biological role, may be a substrate-recognition component of a SCF-like ECS (Elongin-Cullin-SOCS-box protein) E3 ubiquitin-protein ligase complex which mediates the ubiquitination and subsequent proteasomal degradation of target proteins. Plays a role in the inhibition of cardiomyocyte nuclear proliferation by mediating the ubiquitination and degradation of MAPRE2. The sequence is that of Ankyrin repeat and SOCS box protein 14 (ASB14) from Homo sapiens (Human).